The following is a 1391-amino-acid chain: DNA-directed RNA polymerase subunit beta'' (1391 aa).

4 residues coordinate Zn(2+): cysteine 224, cysteine 295, cysteine 302, and cysteine 305.

The protein belongs to the RNA polymerase beta' chain family. RpoC2 subfamily. In plastids the minimal PEP RNA polymerase catalytic core is composed of four subunits: alpha, beta, beta', and beta''. When a (nuclear-encoded) sigma factor is associated with the core the holoenzyme is formed, which can initiate transcription. Zn(2+) is required as a cofactor.

The protein localises to the plastid. It localises to the chloroplast. It catalyses the reaction RNA(n) + a ribonucleoside 5'-triphosphate = RNA(n+1) + diphosphate. DNA-dependent RNA polymerase catalyzes the transcription of DNA into RNA using the four ribonucleoside triphosphates as substrates. In Buxus microphylla (Littleleaf boxwood), this protein is DNA-directed RNA polymerase subunit beta''.